A 624-amino-acid chain; its full sequence is Chaperone protein DnaK (624 aa).

T174 is modified (phosphothreonine; by autocatalysis). Disordered stretches follow at residues 470–504 (ITIK…KEEV) and 577–624 (NGGA…DPDK). Residues 481-504 (EEIKKMQKDAEEHAEEDKKRKEEV) are compositionally biased toward basic and acidic residues. Low complexity predominate over residues 577-605 (NGGAQGAAGQAGPQGPQNGGQPNNDNGSD). Positions 615–624 (GDFHKVDPDK) are enriched in basic and acidic residues.

This sequence belongs to the heat shock protein 70 family.

Functionally, acts as a chaperone. The protein is Chaperone protein DnaK of Lactobacillus johnsonii (strain CNCM I-12250 / La1 / NCC 533).